We begin with the raw amino-acid sequence, 130 residues long: Small ribosomal subunit protein uS9 (130 aa).

It belongs to the universal ribosomal protein uS9 family.

This chain is Small ribosomal subunit protein uS9, found in Xanthomonas oryzae pv. oryzae (strain MAFF 311018).